Here is a 347-residue protein sequence, read N- to C-terminus: Heat-inducible transcription repressor HrcA (347 aa).

The protein belongs to the HrcA family.

Negative regulator of class I heat shock genes (grpE-dnaK-dnaJ and groELS operons). Prevents heat-shock induction of these operons. The polypeptide is Heat-inducible transcription repressor HrcA (Rhodococcus jostii (strain RHA1)).